We begin with the raw amino-acid sequence, 640 residues long: 1-deoxy-D-xylulose-5-phosphate synthase (640 aa).

Residues histidine 79 and 120–122 (AHA) each bind thiamine diphosphate. Aspartate 151 is a binding site for Mg(2+). Residues 152-153 (GS), asparagine 180, tyrosine 287, and glutamate 369 contribute to the thiamine diphosphate site. Asparagine 180 is a binding site for Mg(2+).

This sequence belongs to the transketolase family. DXPS subfamily. In terms of assembly, homodimer. Mg(2+) serves as cofactor. It depends on thiamine diphosphate as a cofactor.

The enzyme catalyses D-glyceraldehyde 3-phosphate + pyruvate + H(+) = 1-deoxy-D-xylulose 5-phosphate + CO2. Its pathway is metabolic intermediate biosynthesis; 1-deoxy-D-xylulose 5-phosphate biosynthesis; 1-deoxy-D-xylulose 5-phosphate from D-glyceraldehyde 3-phosphate and pyruvate: step 1/1. Functionally, catalyzes the acyloin condensation reaction between C atoms 2 and 3 of pyruvate and glyceraldehyde 3-phosphate to yield 1-deoxy-D-xylulose-5-phosphate (DXP). This chain is 1-deoxy-D-xylulose-5-phosphate synthase, found in Hyphomonas neptunium (strain ATCC 15444).